Consider the following 388-residue polypeptide: Succinate--CoA ligase [ADP-forming] subunit beta (388 aa).

The 236-residue stretch at 9–244 (KQLFARYGLP…HSQEDEREAH (236 aa)) folds into the ATP-grasp domain. ATP contacts are provided by residues lysine 46, 53 to 55 (GRG), glutamate 99, threonine 102, and glutamate 107. Asparagine 199 and aspartate 213 together coordinate Mg(2+). Substrate is bound by residues asparagine 264 and 321-323 (GIV).

Belongs to the succinate/malate CoA ligase beta subunit family. As to quaternary structure, heterotetramer of two alpha and two beta subunits. Mg(2+) serves as cofactor.

It carries out the reaction succinate + ATP + CoA = succinyl-CoA + ADP + phosphate. The catalysed reaction is GTP + succinate + CoA = succinyl-CoA + GDP + phosphate. It functions in the pathway carbohydrate metabolism; tricarboxylic acid cycle; succinate from succinyl-CoA (ligase route): step 1/1. Functionally, succinyl-CoA synthetase functions in the citric acid cycle (TCA), coupling the hydrolysis of succinyl-CoA to the synthesis of either ATP or GTP and thus represents the only step of substrate-level phosphorylation in the TCA. The beta subunit provides nucleotide specificity of the enzyme and binds the substrate succinate, while the binding sites for coenzyme A and phosphate are found in the alpha subunit. In Sodalis glossinidius (strain morsitans), this protein is Succinate--CoA ligase [ADP-forming] subunit beta.